Consider the following 591-residue polypeptide: L-fucose isomerase (591 aa).

Residues glutamate 337 and aspartate 361 each act as proton acceptor in the active site. Glutamate 337, aspartate 361, and histidine 528 together coordinate Mn(2+).

Belongs to the L-fucose isomerase family. Homohexamer. Requires Mn(2+) as cofactor.

The protein localises to the cytoplasm. The catalysed reaction is L-fucose = L-fuculose. It participates in carbohydrate degradation; L-fucose degradation; L-lactaldehyde and glycerone phosphate from L-fucose: step 1/3. Converts the aldose L-fucose into the corresponding ketose L-fuculose. The chain is L-fucose isomerase from Escherichia coli O157:H7 (strain EC4115 / EHEC).